The chain runs to 214 residues: 2-phospho-L-lactate guanylyltransferase (214 aa).

Belongs to the CofC family. As to quaternary structure, homodimer.

It catalyses the reaction (2S)-2-phospholactate + GTP + H(+) = (2S)-lactyl-2-diphospho-5'-guanosine + diphosphate. It participates in cofactor biosynthesis; coenzyme F420 biosynthesis. In terms of biological role, guanylyltransferase that catalyzes the activation of (2S)-2-phospholactate (2-PL) as (2S)-lactyl-2-diphospho-5'-guanosine, via the condensation of 2-PL with GTP. It is involved in the biosynthesis of coenzyme F420, a hydride carrier cofactor. In Methanoregula boonei (strain DSM 21154 / JCM 14090 / 6A8), this protein is 2-phospho-L-lactate guanylyltransferase.